A 132-amino-acid polypeptide reads, in one-letter code: Protein NrdI (132 aa).

Belongs to the NrdI family.

Probably involved in ribonucleotide reductase function. The protein is Protein NrdI of Staphylococcus haemolyticus (strain JCSC1435).